We begin with the raw amino-acid sequence, 195 residues long: MSAEQVLDQGRLIVFSAPSGTGKSTVAKLVMERLGSLEFSVSATTRQMRAGERDGVDYHFLSREEFEKKIAENGFIEHEFFFGNFYGTLLDKTIDAIKAGHNLLFDLDVKGALNLKRIFGDQALLVFLKPPSMEELARRLQARDSESAEALKSRLERAEMELSHAGEFDFVVVNDDLGRTVDAVATRIAEFLPQP.

A Guanylate kinase-like domain is found at 10-189; sequence GRLIVFSAPS…TVDAVATRIA (180 aa). Residue 17-24 coordinates ATP; the sequence is APSGTGKS.

The protein belongs to the guanylate kinase family.

The protein localises to the cytoplasm. It catalyses the reaction GMP + ATP = GDP + ADP. Essential for recycling GMP and indirectly, cGMP. The protein is Guanylate kinase of Chlorobaculum tepidum (strain ATCC 49652 / DSM 12025 / NBRC 103806 / TLS) (Chlorobium tepidum).